We begin with the raw amino-acid sequence, 303 residues long: Oxygen-dependent coproporphyrinogen-III oxidase (303 aa).

Serine 93 is a substrate binding site. Residues histidine 97 and histidine 107 each contribute to the a divalent metal cation site. The Proton donor role is filled by histidine 107. Residue asparagine 109–arginine 111 participates in substrate binding. A divalent metal cation-binding residues include histidine 146 and histidine 176. The important for dimerization stretch occupies residues tyrosine 241 to glycine 276. Residue glycine 259 to arginine 261 coordinates substrate.

This sequence belongs to the aerobic coproporphyrinogen-III oxidase family. Homodimer. Requires a divalent metal cation as cofactor.

The protein resides in the cytoplasm. The enzyme catalyses coproporphyrinogen III + O2 + 2 H(+) = protoporphyrinogen IX + 2 CO2 + 2 H2O. It functions in the pathway porphyrin-containing compound metabolism; protoporphyrin-IX biosynthesis; protoporphyrinogen-IX from coproporphyrinogen-III (O2 route): step 1/1. In terms of biological role, involved in the heme biosynthesis. Catalyzes the aerobic oxidative decarboxylation of propionate groups of rings A and B of coproporphyrinogen-III to yield the vinyl groups in protoporphyrinogen-IX. This chain is Oxygen-dependent coproporphyrinogen-III oxidase, found in Pseudomonas putida (strain ATCC 700007 / DSM 6899 / JCM 31910 / BCRC 17059 / LMG 24140 / F1).